We begin with the raw amino-acid sequence, 152 residues long: Sec-independent protein translocase protein TatB (152 aa).

A helical membrane pass occupies residues 1–21; the sequence is MLDVGFGELFCFGIIALLVLG.

This sequence belongs to the TatB family. The Tat system comprises two distinct complexes: a TatABC complex, containing multiple copies of TatA, TatB and TatC subunits, and a separate TatA complex, containing only TatA subunits. Substrates initially bind to the TatABC complex, which probably triggers association of the separate TatA complex to form the active translocon.

The protein resides in the cell inner membrane. Part of the twin-arginine translocation (Tat) system that transports large folded proteins containing a characteristic twin-arginine motif in their signal peptide across membranes. Together with TatC, TatB is part of a receptor directly interacting with Tat signal peptides. TatB may form an oligomeric binding site that transiently accommodates folded Tat precursor proteins before their translocation. This Acinetobacter baylyi (strain ATCC 33305 / BD413 / ADP1) protein is Sec-independent protein translocase protein TatB.